A 417-amino-acid polypeptide reads, in one-letter code: Neuropeptide FF receptor 2 (417 aa).

At 1–45 (MGKRWDSNSSGSWDHIWSGNDTQHPWYSDINITYMNYYLHQPHVT) the chain is on the extracellular side. 3 N-linked (GlcNAc...) asparagine glycosylation sites follow: N8, N20, and N31. A helical transmembrane segment spans residues 46-66 (AVFISSYFLIFFLCMVGNTVV). Topologically, residues 67–82 (CFVVIRNRYMHTVTNF) are cytoplasmic. A helical transmembrane segment spans residues 83–103 (FIFNLAISDLLVGIFCMPITL). Over 104 to 119 (LDNIIAGWPFGSSMCK) the chain is Extracellular. C118 and C206 are disulfide-bonded. A helical membrane pass occupies residues 120-140 (ISGLVQGISVAASVFTLVAIA). Topologically, residues 141–160 (VDRFRCVVYPFKPKLTVKTA) are cytoplasmic. Residues 161 to 181 (FVMIVIIWGLAITIMTPSAIM) form a helical membrane-spanning segment. At 182–217 (LHVQEEKYYRVRLSSHNKTSTVYWCREDWPNQEMRR) the chain is on the extracellular side. N198 carries N-linked (GlcNAc...) asparagine glycosylation. Residues 218–238 (IYTTVLFATIYLAPLSLIVIM) form a helical membrane-spanning segment. The Cytoplasmic portion of the chain corresponds to 239 to 274 (YARIGASLFKTSAHSTGKQRLEQWHVSKKKQKVIKM). The chain crosses the membrane as a helical span at residues 275–295 (LLTVALLFILSWLPLWTLMML). Topologically, residues 296-310 (SDYADLSPNKLRVIN) are extracellular. Residues 311–331 (IYVYPFAHWLAFCNSSVNPII) traverse the membrane as a helical segment. The Cytoplasmic portion of the chain corresponds to 332 to 417 (YGFFNENFRS…TGEATNSTET (86 aa)). Positions 378 to 417 (HEPASQNPSGENLGCRKSADNPTQESLMEETGEATNSTET) are disordered.

The protein belongs to the G-protein coupled receptor 1 family.

The protein localises to the cell membrane. In terms of biological role, receptor for NPAF (A-18-F-amide) and NPFF (F-8-F-amide) neuropeptides, also known as morphine-modulating peptides. Can also be activated by a variety of naturally occurring or synthetic FMRF-amide like ligands. This receptor mediates its action by association with G proteins that activate a phosphatidylinositol-calcium second messenger system. The polypeptide is Neuropeptide FF receptor 2 (Npffr2) (Rattus norvegicus (Rat)).